We begin with the raw amino-acid sequence, 463 residues long: Cysteine--tRNA ligase (463 aa).

Cys30 contacts Zn(2+). The 'HIGH' region signature appears at 32–42; sequence MTVYDYCHVGH. Zn(2+) contacts are provided by Cys214, His239, and Glu243. Positions 271–275 match the 'KMSKS' region motif; it reads KMSKS. Lys274 serves as a coordination point for ATP.

Belongs to the class-I aminoacyl-tRNA synthetase family. In terms of assembly, monomer. Zn(2+) is required as a cofactor.

It localises to the cytoplasm. The catalysed reaction is tRNA(Cys) + L-cysteine + ATP = L-cysteinyl-tRNA(Cys) + AMP + diphosphate. This Ralstonia pickettii (strain 12J) protein is Cysteine--tRNA ligase.